The following is a 44-amino-acid chain: Protein PsbN (44 aa).

The helical transmembrane segment at 6-26 threads the bilayer; sequence FFFTIFVWFLLISVTGYSIYV.

This sequence belongs to the PsbN family.

The protein localises to the plastid. Its subcellular location is the chloroplast thylakoid membrane. In terms of biological role, may play a role in photosystem I and II biogenesis. The protein is Protein PsbN of Bigelowiella natans (Pedinomonas minutissima).